Reading from the N-terminus, the 554-residue chain is 2-succinyl-5-enolpyruvyl-6-hydroxy-3-cyclohexene-1-carboxylate synthase (554 aa).

The protein belongs to the TPP enzyme family. MenD subfamily. In terms of assembly, homodimer. Mg(2+) is required as a cofactor. Requires Mn(2+) as cofactor. It depends on thiamine diphosphate as a cofactor.

The catalysed reaction is isochorismate + 2-oxoglutarate + H(+) = 5-enolpyruvoyl-6-hydroxy-2-succinyl-cyclohex-3-ene-1-carboxylate + CO2. It functions in the pathway quinol/quinone metabolism; 1,4-dihydroxy-2-naphthoate biosynthesis; 1,4-dihydroxy-2-naphthoate from chorismate: step 2/7. Its pathway is quinol/quinone metabolism; menaquinone biosynthesis. In terms of biological role, catalyzes the thiamine diphosphate-dependent decarboxylation of 2-oxoglutarate and the subsequent addition of the resulting succinic semialdehyde-thiamine pyrophosphate anion to isochorismate to yield 2-succinyl-5-enolpyruvyl-6-hydroxy-3-cyclohexene-1-carboxylate (SEPHCHC). This Renibacterium salmoninarum (strain ATCC 33209 / DSM 20767 / JCM 11484 / NBRC 15589 / NCIMB 2235) protein is 2-succinyl-5-enolpyruvyl-6-hydroxy-3-cyclohexene-1-carboxylate synthase.